Here is a 322-residue protein sequence, read N- to C-terminus: Replication factor C small subunit 2 (322 aa).

ATP is bound at residue 44–51 (GPPGTGKT).

This sequence belongs to the activator 1 small subunits family. RfcS subfamily. In terms of assembly, heteromultimer composed of small subunits (RfcS) and large subunits (RfcL).

In terms of biological role, part of the RFC clamp loader complex which loads the PCNA sliding clamp onto DNA. The chain is Replication factor C small subunit 2 from Pyrobaculum arsenaticum (strain DSM 13514 / JCM 11321 / PZ6).